The following is a 482-amino-acid chain: [Fructose-bisphosphate aldolase]-lysine N-methyltransferase, chloroplastic (482 aa).

Residues 1 to 57 (MSASVAVVSGFLRIPSIQKSQNPSFLFSRPKKSLVRPISASSSELPENVRNFWKWLR) constitute a chloroplast transit peptide. Residues 59 to 282 (QGVVSGKSVA…AGEQVYIQYD (224 aa)) enclose the SET domain. S-adenosyl-L-methionine contacts are provided by residues 75-77 (EGL) and Arg-217. Residues Arg-217, Arg-221, and Asp-234 each contribute to the substrate site. Position 237–238 (237–238 (NH)) interacts with S-adenosyl-L-methionine. Substrate contacts are provided by Tyr-249, Tyr-281, and Tyr-294.

This sequence belongs to the class V-like SAM-binding methyltransferase superfamily. Plant protein-lysine LSMT methyltransferase family.

The protein resides in the plastid. The protein localises to the chloroplast stroma. The catalysed reaction is [fructose-bisphosphate aldolase]-L-lysine + 3 S-adenosyl-L-methionine = [fructose-bisphosphate aldolase]-N(6),N(6),N(6)-trimethyl-L-lysine + 3 S-adenosyl-L-homocysteine + 3 H(+). Its function is as follows. Protein-lysine methyltransferase methylating chloroplastic fructose 1,6-bisphosphate aldolases. Can also use with low efficiency gamma-tocopherol methyltransferase as substrate, but not a cytosolic aldolase. Able to interact with unmethylated Rubisco, but unlike in pea, the complex is catalytically unproductive. This Arabidopsis thaliana (Mouse-ear cress) protein is [Fructose-bisphosphate aldolase]-lysine N-methyltransferase, chloroplastic (LSMT-L).